The chain runs to 269 residues: Small ribosomal subunit protein eS1 (269 aa).

Disordered stretches follow at residues 1-20 (MAVG…SKKK) and 249-269 (AASG…QESV).

Belongs to the eukaryotic ribosomal protein eS1 family. In terms of assembly, component of the small ribosomal subunit. Mature ribosomes consist of a small (40S) and a large (60S) subunit. The 40S subunit contains about 33 different proteins and 1 molecule of RNA (18S). The 60S subunit contains about 49 different proteins and 3 molecules of RNA (28S, 5.8S and 5S).

It localises to the cytoplasm. The chain is Small ribosomal subunit protein eS1 from Anopheles darlingi (Mosquito).